We begin with the raw amino-acid sequence, 186 residues long: uncharacterized protein (186 aa).

This sequence belongs to the geranylgeranyl reductase family. ChlP subfamily.

This is an uncharacterized protein from Methanosarcina barkeri.